A 220-amino-acid chain; its full sequence is Ras-related protein Rab-3A (220 aa).

GTP is bound by residues Ser31, Ser32, Val33, Gly34, Lys35, Thr36, Ser37, Thr48, Pro49, Ser53, and Thr54. Thr36 lines the Mg(2+) pocket. The short motif at 49 to 58 (PAFVSTVGID) is the Switch 1 element. Residues Thr54 and Asp77 each contribute to the Mg(2+) site. Gly80 contributes to the GTP binding site. The short motif at 80–96 (GQERYRTITTAYYRGAM) is the Switch 2 element. Position 86 is a phosphothreonine (Thr86). Asn135, Lys136, Asp138, Ala166, and Lys167 together coordinate GTP. A phosphoserine mark is found at Ser188 and Ser190. Residues 194 to 220 (ADPAVTGAKQGPQLTDQQAPPHQDCAC) are disordered. 2 S-geranylgeranyl cysteine lipidation sites follow: Cys218 and Cys220. Cys220 carries the post-translational modification Cysteine methyl ester.

The protein belongs to the small GTPase superfamily. Rab family. Interacts with RIMS1 and RIMS2. Interacts with Rabphilin-3A/RPH3A and Rab effector Noc2/RPH3AL. Interacts with SYTL4. Interacts with RAB3IP. Interacts with SGSM1 and SGSM3. Interacts with SYT1. Interacts with MYH9; this interaction is essential for lysosome exocytosis and plasma membrane repair. Interacts with STXBP1; this interaction promotes RAB3A dissociation from the vesicle membrane. Interacts with SNCA. Interacts with GDI1, GDI2, CHM and CHML; phosphorylation at Thr-86 disrupts these interactions. Interacts with MADD (via uDENN domain); the GTP-bound form is preferred for interaction. It depends on Mg(2+) as a cofactor. Post-translationally, phosphorylation of Thr-86 in the switch II region by LRRK2 prevents the association of RAB regulatory proteins, including CHM, CHML and RAB GDP dissociation inhibitors GDI1 and GDI2.

It is found in the cytoplasm. The protein resides in the cytosol. It localises to the lysosome. The protein localises to the cytoplasmic vesicle. Its subcellular location is the secretory vesicle. It is found in the cell projection. The protein resides in the axon. It localises to the cell membrane. The protein localises to the presynapse. Its subcellular location is the postsynapse. The enzyme catalyses GTP + H2O = GDP + phosphate + H(+). Its activity is regulated as follows. Regulated by guanine nucleotide exchange factors (GEFs) including RAB3IL1 and MADD which promote the exchange of bound GDP for free GTP. Regulated by GTPase activating proteins (GAPs) including RAB3GAP1 and TBC1D10B which increase the GTP hydrolysis activity. Inhibited by GDP dissociation inhibitors (GDIs) which prevent Rab-GDP dissociation. The small GTPases Rab are key regulators of intracellular membrane trafficking, from the formation of transport vesicles to their fusion with membranes. Rabs cycle between an inactive GDP-bound form and an active GTP-bound form that is able to recruit to membranes different sets of downstream effectors directly responsible for vesicle formation, movement, tethering and fusion. RAB3A plays a central role in regulated exocytosis and secretion. Controls the recruitment, tethering and docking of secretory vesicles to the plasma membrane. Upon stimulation, switches to its active GTP-bound form, cycles to vesicles and recruits effectors such as RIMS1, RIMS2, Rabphilin-3A/RPH3A, RPH3AL or SYTL4 to help the docking of vesicules onto the plasma membrane. Upon GTP hydrolysis by GTPase-activating protein, dissociates from the vesicle membrane allowing the exocytosis to proceed. Stimulates insulin secretion through interaction with RIMS2 or RPH3AL effectors in pancreatic beta cells. Regulates calcium-dependent lysosome exocytosis and plasma membrane repair (PMR) via the interaction with 2 effectors, SYTL4 and myosin-9/MYH9. Acts as a positive regulator of acrosome content secretion in sperm cells by interacting with RIMS1. Also plays a role in the regulation of dopamine release by interacting with synaptotagmin I/SYT. The sequence is that of Ras-related protein Rab-3A (RAB3A) from Sus scrofa (Pig).